The chain runs to 226 residues: LexA repressor (226 aa).

The H-T-H motif DNA-binding region spans 42–62; sequence MREIGDAVGLASLSSVTHQLN. Catalysis depends on for autocatalytic cleavage activity residues Ser-150 and Lys-187.

This sequence belongs to the peptidase S24 family. In terms of assembly, homodimer.

The enzyme catalyses Hydrolysis of Ala-|-Gly bond in repressor LexA.. Represses a number of genes involved in the response to DNA damage (SOS response), including recA and lexA. In the presence of single-stranded DNA, RecA interacts with LexA causing an autocatalytic cleavage which disrupts the DNA-binding part of LexA, leading to derepression of the SOS regulon and eventually DNA repair. This chain is LexA repressor, found in Clavibacter sepedonicus (Clavibacter michiganensis subsp. sepedonicus).